We begin with the raw amino-acid sequence, 224 residues long: TBP-related factor (224 aa).

Residues 14–34 (RDNVAATSNAAANPHAALQPQ) are disordered. Positions 17-34 (VAATSNAAANPHAALQPQ) are enriched in low complexity. 2 tandem repeats follow at residues 51–127 (LQNI…ARIL) and 141–218 (LQNI…SPIL).

This sequence belongs to the TBP family. Primary spermatocytes in the adult testis and in a subset of cells in the dorsal medial region of the embryonic CNS.

It localises to the nucleus. Acts as a transcription factor. Binds to the TATA box promoter element which lies close to the position of transcription initiation. In terms of biological role, may be essential for embryonic development. This is TBP-related factor (Trf) from Drosophila melanogaster (Fruit fly).